Here is a 232-residue protein sequence, read N- to C-terminus: Large ribosomal subunit protein uL1 (232 aa).

The protein belongs to the universal ribosomal protein uL1 family. In terms of assembly, part of the 50S ribosomal subunit.

Binds directly to 23S rRNA. The L1 stalk is quite mobile in the ribosome, and is involved in E site tRNA release. In terms of biological role, protein L1 is also a translational repressor protein, it controls the translation of the L11 operon by binding to its mRNA. The polypeptide is Large ribosomal subunit protein uL1 (Burkholderia vietnamiensis (strain G4 / LMG 22486) (Burkholderia cepacia (strain R1808))).